The sequence spans 344 residues: Heat-inducible transcription repressor HrcA (344 aa).

This sequence belongs to the HrcA family.

In terms of biological role, negative regulator of class I heat shock genes (grpE-dnaK-dnaJ and groELS operons). Prevents heat-shock induction of these operons. In Streptococcus pneumoniae (strain 70585), this protein is Heat-inducible transcription repressor HrcA.